Here is a 213-residue protein sequence, read N- to C-terminus: Probable GTP-binding protein EngB (213 aa).

One can recognise an EngB-type G domain in the interval 30-204 (SVQSIAFMGR…REFILETLGI (175 aa)). GTP contacts are provided by residues 38 to 45 (GRSNSGKS), 65 to 69 (GKTKL), 83 to 86 (DLPG), 150 to 153 (TKID), and 183 to 185 (ISA). Positions 45 and 67 each coordinate Mg(2+).

The protein belongs to the TRAFAC class TrmE-Era-EngA-EngB-Septin-like GTPase superfamily. EngB GTPase family. It depends on Mg(2+) as a cofactor.

Necessary for normal cell division and for the maintenance of normal septation. In Leptospira biflexa serovar Patoc (strain Patoc 1 / Ames), this protein is Probable GTP-binding protein EngB.